A 135-amino-acid chain; its full sequence is T-cell receptor beta chain V region 3H.25 (135 aa).

A signal peptide spans 1–20 (MATRLLCYTVLCLLGARILN). Residues 21–115 (SKVIQTPRYL…SALYLCASSL (95 aa)) form a v segment region. Cys-42 and Cys-111 are disulfide-bonded. The segment at 116 to 118 (FGT) is d segment. Positions 119–135 (SDYTFGSGTRLLVIGKA) are j segment.

The chain is T-cell receptor beta chain V region 3H.25 from Mus musculus (Mouse).